Reading from the N-terminus, the 81-residue chain is Acyl carrier protein (81 aa).

The region spanning 2–80 (ASNEEILAGL…DAVSFIANAQ (79 aa)) is the Carrier domain. The residue at position 40 (serine 40) is an O-(pantetheine 4'-phosphoryl)serine.

Belongs to the acyl carrier protein (ACP) family. 4'-phosphopantetheine is transferred from CoA to a specific serine of apo-ACP by AcpS. This modification is essential for activity because fatty acids are bound in thioester linkage to the sulfhydryl of the prosthetic group.

The protein resides in the cytoplasm. It participates in lipid metabolism; fatty acid biosynthesis. Its function is as follows. Carrier of the growing fatty acid chain in fatty acid biosynthesis. The polypeptide is Acyl carrier protein (Paenarthrobacter aurescens (strain TC1)).